Consider the following 360-residue polypeptide: Inward rectifier potassium channel 13 (360 aa).

The Cytoplasmic portion of the chain corresponds to 1–50; the sequence is MESSNCKVITPLLSQRHRRMVTKDGHSTLQTDGAPRGLVYLRDAWGTLID. The chain crosses the membrane as a helical span at residues 51 to 77; the sequence is MRWRWVMLVFSASFVLHWLVFAVLWYV. The Extracellular segment spans residues 78–105; the sequence is LAEMNGDLELDHDAPPENHTICVKYITS. The segment at residues 106–122 is an intramembrane region (helical; Pore-forming); that stretch reads FTAAFSFSLETQLTIGY. The short motif at 119–124 is the Selectivity filter element; it reads TIGYGT. The Extracellular portion of the chain corresponds to 123–131; sequence GTMFPSGDC. Residues 132-157 traverse the membrane as a helical segment; it reads PSAIALLAIQMLLGLMLEAFITGAFV. At 158–360 the chain is on the cytoplasmic side; that stretch reads AKIARPKNRA…FQISETGLTE (203 aa). Position 201 is a phosphoserine; by PKC (Ser-201). Ser-287 is subject to Phosphoserine; by PKA.

Belongs to the inward rectifier-type potassium channel (TC 1.A.2.1) family. KCNJ13 subfamily. As to quaternary structure, homotetramer. In terms of processing, phosphorylation at Ser-201 by PKC strongly inhibits ionic currents, while phosphorylation at Ser-287 by PKA increases them.

The protein localises to the membrane. The protein resides in the cell membrane. It catalyses the reaction K(+)(in) = K(+)(out). Inhibited by Ba(2+) and Cs(+), although sensitivity to those inhibitors is much lower than in other Kir channels. Inward rectifier potassium channels are characterized by a greater tendency to allow potassium to flow into the cell rather than out of it. Their voltage dependence is regulated by the concentration of extracellular potassium; as external potassium is raised, the voltage range of the channel opening shifts to more positive voltages. The inward rectification is mainly due to the blockage of outward current by internal magnesium. KCNJ13 has a very low single channel conductance, low sensitivity to block by external barium and cesium, and no dependence of its inward rectification properties on the internal blocking particle magnesium. The sequence is that of Inward rectifier potassium channel 13 (KCNJ13) from Cavia porcellus (Guinea pig).